The chain runs to 455 residues: Glycylpeptide N-tetradecanoyltransferase (455 aa).

Residue 38 to 41 (HKFW) coordinates tetradecanoyl-CoA. The myristoyl CoA-binding stretch occupies residues 168-204 (INFLCVHKQLRSKRLTPVLIKEITRRVNKCDIWHALY). Leu455 serves as the catalytic Proton acceptor; via carboxylate.

The protein belongs to the NMT family. Monomer. Post-translationally, the N-terminus is blocked.

Its subcellular location is the cytoplasm. The catalysed reaction is N-terminal glycyl-[protein] + tetradecanoyl-CoA = N-tetradecanoylglycyl-[protein] + CoA + H(+). Its activity is regulated as follows. Inhibited by diethylpyrocarbonate. Competitively inhibited by S-(2-oxo)pentadecyl-CoA, a non hydrolysable myristoyl-CoA analog, and by SC-58272, a peptidomimetic derived from the N-terminal sequence of a natural substrate. Its function is as follows. Adds a myristoyl group to the N-terminal glycine residue of certain cellular proteins. Substrate specificity requires an N-terminal glycine in the nascent polypeptide substrates. Uncharged amino acids are preferred at position 2 while neutral residues are favored at positions 3 and 4. Ser is present at position 5 in almost all known N-myristoyl proteins and Lys is commonly encountered at postion 6. In Saccharomyces cerevisiae (strain ATCC 204508 / S288c) (Baker's yeast), this protein is Glycylpeptide N-tetradecanoyltransferase (NMT1).